The primary structure comprises 374 residues: Alcohol dehydrogenase 1 (374 aa).

Ser-1 is modified (N-acetylserine). Cys-46, His-67, Cys-97, Cys-100, Cys-103, Cys-111, and Cys-174 together coordinate Zn(2+). NAD(+)-binding positions include 199–204 (GLGGVG), Asp-223, Lys-228, 292–294 (VGV), and Arg-369.

The protein belongs to the zinc-containing alcohol dehydrogenase family. Class-I subfamily. It depends on Zn(2+) as a cofactor.

Its subcellular location is the cytoplasm. It catalyses the reaction a primary alcohol + NAD(+) = an aldehyde + NADH + H(+). The catalysed reaction is a secondary alcohol + NAD(+) = a ketone + NADH + H(+). This chain is Alcohol dehydrogenase 1, found in Alligator mississippiensis (American alligator).